A 245-amino-acid chain; its full sequence is MSLTSIPSLREQQHPLIRQLADCIEEVWHQHLDLSPYHLPAELGYVEGRLEGEKLTIENRCYQTPQFRKMHLELAKVGNMLDILHCVMFPRPEYDLPMFGCDLVGGRGQISAAIADLSPVHLDRTLPESYNSALTSLNTLNFSQPRELPEWGNIFSDFCIFVRPSSPEEEAMFLGRVREFLQVHCQGAIAASPVSAEQKQQILAGQHNYCSKQQQNDKTRRVLEKAFGVDWAENYMTTVLFDLPE.

It belongs to the HY2 family.

The catalysed reaction is (2R,3Z)-phycocyanobilin + 4 oxidized [2Fe-2S]-[ferredoxin] = biliverdin IXalpha + 4 reduced [2Fe-2S]-[ferredoxin] + 4 H(+). In terms of biological role, catalyzes the four-electron reduction of biliverdin IX-alpha (2-electron reduction at both the A and D rings); the reaction proceeds via an isolatable 2-electron intermediate, 181,182-dihydrobiliverdin. Upon overexpression in E.coli with PCB:ferredoxin oxidoreductase, CpeS and either CpcB or PecB permits synthesis of phycocyanin-coupled CpcB or PecB. This Nostoc sp. (strain PCC 7120 / SAG 25.82 / UTEX 2576) protein is Phycocyanobilin:ferredoxin oxidoreductase (pcyA).